Consider the following 98-residue polypeptide: NADH-ubiquinone oxidoreductase chain 4L (98 aa).

3 helical membrane-spanning segments follow: residues 1 to 21 (MSPI…GMLV), 26 to 46 (LMAS…MIAL), and 61 to 81 (IILL…LVSI).

It belongs to the complex I subunit 4L family. In terms of assembly, core subunit of respiratory chain NADH dehydrogenase (Complex I) which is composed of 45 different subunits.

It is found in the mitochondrion inner membrane. It catalyses the reaction a ubiquinone + NADH + 5 H(+)(in) = a ubiquinol + NAD(+) + 4 H(+)(out). Core subunit of the mitochondrial membrane respiratory chain NADH dehydrogenase (Complex I) which catalyzes electron transfer from NADH through the respiratory chain, using ubiquinone as an electron acceptor. Part of the enzyme membrane arm which is embedded in the lipid bilayer and involved in proton translocation. In Chlorocebus sabaeus (Green monkey), this protein is NADH-ubiquinone oxidoreductase chain 4L (MT-ND4L).